We begin with the raw amino-acid sequence, 158 residues long: NADPH-dependent 7-cyano-7-deazaguanine reductase (158 aa).

Cysteine 56 (thioimide intermediate) is an active-site residue. The Proton donor role is filled by aspartate 63. Residues 78-80 (LES) and 97-98 (HE) contribute to the substrate site.

The protein belongs to the GTP cyclohydrolase I family. QueF type 1 subfamily.

It localises to the cytoplasm. The catalysed reaction is 7-aminomethyl-7-carbaguanine + 2 NADP(+) = 7-cyano-7-deazaguanine + 2 NADPH + 3 H(+). The protein operates within tRNA modification; tRNA-queuosine biosynthesis. Functionally, catalyzes the NADPH-dependent reduction of 7-cyano-7-deazaguanine (preQ0) to 7-aminomethyl-7-deazaguanine (preQ1). In Nitrobacter winogradskyi (strain ATCC 25391 / DSM 10237 / CIP 104748 / NCIMB 11846 / Nb-255), this protein is NADPH-dependent 7-cyano-7-deazaguanine reductase.